A 309-amino-acid polypeptide reads, in one-letter code: L-aminoadipate-semialdehyde dehydrogenase-phosphopantetheinyl transferase (309 aa).

CoA contacts are provided by residues Arg-47, 86–91 (RTSKGK), and 108–111 (NISH). The Mg(2+) site is built by Asp-129 and Glu-181. Position 181–185 (181–185 (ESFIK)) interacts with CoA.

The protein belongs to the P-Pant transferase superfamily. AcpS family. Monomer. Mg(2+) is required as a cofactor.

The protein localises to the cytoplasm. It localises to the cytosol. It carries out the reaction apo-[ACP] + CoA = holo-[ACP] + adenosine 3',5'-bisphosphate + H(+). The catalysed reaction is apo-[ACP] + acetyl-CoA = acetyl-[ACP] + adenosine 3',5'-bisphosphate + H(+). Catalyzes the post-translational modification of target proteins by phosphopantetheine. Can transfer the 4'-phosphopantetheine moiety from coenzyme A, regardless of whether the CoA is presented in the free thiol form or as an acetyl thioester, to a serine residue of a broad range of acceptors including the acyl carrier domain of FASN. This chain is L-aminoadipate-semialdehyde dehydrogenase-phosphopantetheinyl transferase (Aasdhppt), found in Rattus norvegicus (Rat).